The primary structure comprises 216 residues: Transmembrane emp24 domain-containing protein eca (216 aa).

The signal sequence occupies residues 1–20 (MRDQILSLALLLCVLHSACG). Residues 21–182 (LYFHISETER…FRHTSESTNS (162 aa)) are Lumenal-facing. The 97-residue stretch at 30 to 126 (RKCFIEEVPD…QLRVHLDIQV (97 aa)) folds into the GOLD domain. A coiled-coil region spans residues 134–164 (ANVAQKEKLTELQLRIRQLLDQVEQITKEQN). The helical transmembrane segment at 183-203 (RVLWWSLAQTVVLVCMGFWQM) threads the bilayer. Over 204–216 (RHLKSFFEAKKLV) the chain is Cytoplasmic. A Prevents secretion from ER motif is present at residues 213 to 216 (KKLV).

Belongs to the EMP24/GP25L family.

The protein localises to the endoplasmic reticulum membrane. Functionally, eca and bai are essential, though not redundant, for dorsoventral patterning of the embryo. Specifically required during early embryogenesis for the activity of maternal tkv, while the zygotic tkv is not affected. Involved in Golgi organization. The sequence is that of Transmembrane emp24 domain-containing protein eca from Drosophila ananassae (Fruit fly).